A 154-amino-acid polypeptide reads, in one-letter code: Egg-lysin (154 aa).

The first 18 residues, 1–18, serve as a signal peptide directing secretion; sequence MKLLVLCIFAMMATLAMS.

Homodimer. As to expression, sperm.

Dissolves the egg vitelline layer nonenzymatically during fertilization. It creates a hole of about 3 mu-m in diameter through which the sperm pass. The polypeptide is Egg-lysin (Haliotis walallensis (Flat abalone)).